The following is a 156-amino-acid chain: Transcriptional repressor NrdR (156 aa).

The segment at 3–34 (CPFCGSMDTRVLDSRPTLDGTAIRRRRECSSC) is a zinc-finger region. The 91-residue stretch at 49–139 (VLVVKKDGRR…VYRDFREVDQ (91 aa)) folds into the ATP-cone domain.

Belongs to the NrdR family. The cofactor is Zn(2+).

Negatively regulates transcription of bacterial ribonucleotide reductase nrd genes and operons by binding to NrdR-boxes. This chain is Transcriptional repressor NrdR, found in Thermotoga maritima (strain ATCC 43589 / DSM 3109 / JCM 10099 / NBRC 100826 / MSB8).